The primary structure comprises 187 residues: Fibroblast growth factor 4A (187 aa).

The first 22 residues, 1–22 (MTVPSALVPILLLGTAAVMVQC), serve as a signal peptide directing secretion.

This sequence belongs to the heparin-binding growth factors family.

It localises to the secreted. Its function is as follows. Plays an important role in the regulation of embryonic development, cell proliferation, and cell differentiation. Good candidate for an inducing factor with possible roles both in mesoderm induction at the blastula stage and in the formation of the anteroposterior axis at the gastrula stage. This Xenopus laevis (African clawed frog) protein is Fibroblast growth factor 4A (fgf4-a).